Here is a 398-residue protein sequence, read N- to C-terminus: Acetate kinase (398 aa).

Asn-8 provides a ligand contact to Mg(2+). Residue Lys-15 coordinates ATP. Substrate is bound at residue Arg-90. Asp-147 acts as the Proton donor/acceptor in catalysis. ATP contacts are provided by residues 207-211 (HIGAG), 282-284 (DMR), and 330-334 (GVGEN). Glu-383 is a binding site for Mg(2+).

This sequence belongs to the acetokinase family. As to quaternary structure, homodimer. It depends on Mg(2+) as a cofactor. Mn(2+) serves as cofactor.

The protein resides in the cytoplasm. It catalyses the reaction acetate + ATP = acetyl phosphate + ADP. The protein operates within metabolic intermediate biosynthesis; acetyl-CoA biosynthesis; acetyl-CoA from acetate: step 1/2. In terms of biological role, catalyzes the formation of acetyl phosphate from acetate and ATP. Can also catalyze the reverse reaction. In Limosilactobacillus fermentum (strain NBRC 3956 / LMG 18251) (Lactobacillus fermentum), this protein is Acetate kinase.